Consider the following 452-residue polypeptide: MSSSAIKIRNALLKATDPKLRSDNWQYILDVCDLVKEDPEDNGQEVMSLIEKRLEQQDANVILRTLSLTVSLAENCGSRLRQEISSKNFTSLLYALIESHSVHITLKKAVTDVVKQLSDSFKDDPSLRAMGDLYDKIKRKAPYLVQPNVPEKHNMSTQADNSDDEELQKALKMSLFEYEKQKKLQEQEKESAEVLPQQQQQHQQQNQAPAHKIPAQTVVRRVRALYDLTTNEPDELSFRKGDVITVLEQVYRDWWKGALRGNMGIFPLNYVTPIVEPSKEEIEKEKNKEAIVFSQKTTIDQLHNSLNAASKTGNSNEVLQDPHIGDMYGSVTPLRPQVTRMLGKYAKEKEDMLSLRQVLANAERSYNQLMDRAANAHISPPVPGPALYAGMTHANNTPVMPPQRQSYQSNEYSPYPSNLPIQHPTNSANNTPQYGYDLGYSVVSQPPPGYEQ.

Serine 2 is subject to N-acetylserine. The VHS domain maps to alanine 15 to valine 145. 2 disordered regions span residues leucine 144–glutamate 166 and glutamine 187–lysine 212. Serine 162 carries the post-translational modification Phosphoserine. One can recognise a UIM domain in the interval serine 162–glutamine 181. Positions glutamine 197–glutamine 207 are enriched in low complexity. In terms of domain architecture, SH3 spans threonine 217 to glutamate 276. Residues alanine 389–glutamine 452 are disordered. The span at histidine 393–glutamine 433 shows a compositional bias: polar residues.

Belongs to the STAM family. As to quaternary structure, component of the ESCRT-0 complex composed of HSE1 and VPS27. Interacts with the ESCRT-I subunit VPS23, the UBP7 deubiquitinase and the E3 ligase RSP5. May form a complex composed of VPS27, HSE1 and DOA1. Interacts (via SH3 domain) with DOA1.

The protein resides in the endosome membrane. Its function is as follows. Component of the ESCRT-0 complex which is the sorting receptor for ubiquitinated cargo proteins at the multivesicular body (MVB) and recruits ESCRT-I to the MVB outer membrane. The sequence is that of Class E vacuolar protein-sorting machinery protein HSE1 (HSE1) from Saccharomyces cerevisiae (strain ATCC 204508 / S288c) (Baker's yeast).